The primary structure comprises 274 residues: Small ribosomal subunit protein uS2 (274 aa).

Belongs to the universal ribosomal protein uS2 family.

This Syntrophobacter fumaroxidans (strain DSM 10017 / MPOB) protein is Small ribosomal subunit protein uS2.